Reading from the N-terminus, the 495-residue chain is Probable histidine ammonia-lyase (495 aa).

The segment at residues Ala-141 to Gly-143 is a cross-link (5-imidazolinone (Ala-Gly)). 2,3-didehydroalanine (Ser) is present on Ser-142.

The protein belongs to the PAL/histidase family. Post-translationally, contains an active site 4-methylidene-imidazol-5-one (MIO), which is formed autocatalytically by cyclization and dehydration of residues Ala-Ser-Gly.

The protein resides in the cytoplasm. The enzyme catalyses L-histidine = trans-urocanate + NH4(+). Its pathway is amino-acid degradation; L-histidine degradation into L-glutamate; N-formimidoyl-L-glutamate from L-histidine: step 1/3. The polypeptide is Probable histidine ammonia-lyase (Thermoplasma volcanium (strain ATCC 51530 / DSM 4299 / JCM 9571 / NBRC 15438 / GSS1)).